The following is a 133-amino-acid chain: uncharacterized protein (133 aa).

This is an uncharacterized protein from Rickettsia conorii (strain ATCC VR-613 / Malish 7).